The sequence spans 414 residues: MDKDYSAPNFLGESSGGNDDNSSGMIDYMFNRNLQQQQKQSMPQQQQHQLSPSGFGATPFDKMNFSDVMQFADFGSKLALNQTRNQDDQETGIDPVYFLKFPVLNDKIEDHNQTQHLMPSHQTSQEGGECGGNIGNVFLEEKEDQDDDNDNNSVQLRFIGGEEEDRENKNVTKKEVKSKRKRARTSKTSEEVESQRMTHIAVERNRRKQMNEHLRVLRSLMPGSYVQRGDQASIIGGAIEFVRELEQLLQCLESQKRRRILGETGRDMTTTTTSSSSPITTVANQAQPLIITGNVTELEGGGGLREETAENKSCLADVEVKLLGFDAMIKILSRRRPGQLIKTIAALEDLHLSILHTNITTMEQTVLYSFNVKITSETRFTAEDIASSIQQIFSFIHANTNISGSSNLGNIVFT.

Disordered regions lie at residues 1 to 61 and 142 to 197; these read MDKD…TPFD and KEDQ…SQRM. 2 stretches are compositionally biased toward low complexity: residues 12-24 and 35-49; these read GESS…NSSG and QQQQ…QQHQ. The span at 166-175 shows a compositional bias: basic and acidic residues; it reads RENKNVTKKE. A compositionally biased stretch (basic residues) spans 176-185; that stretch reads VKSKRKRART. Over residues 187 to 197 the composition is skewed to basic and acidic residues; that stretch reads KTSEEVESQRM. In terms of domain architecture, bHLH spans 194–245; sequence SQRMTHIAVERNRRKQMNEHLRVLRSLMPGSYVQRGDQASIIGGAIEFVREL. A LxCxE motif motif is present at residues 249–253; sequence LQCLE.

Interacts with FAMA through its LxCxE motif. Self-interacts. Also interacts with bHLH071 and bHLH093. Interacts with RBR1. Resctricted to stomatal cell lineages (at protein level). Expressed in roots, leaves, stems, and flowers.

It is found in the nucleus. Transcription activator. Together with MYB88 and MYB124, ensures that stomata contain just two guard cells (GCs) by enforcing a single symmetric precursor cell division before stomatal maturity. Together with SPCH and MUTE, regulates the stomata formation. Required to promote differentiation and morphogenesis of stomatal guard cells and to halt proliferative divisions in their immediate precursors. Mediates the formation of stomata. Prevents histone H3K27me3 marks and derepresses stem cell gene expression. In Arabidopsis thaliana (Mouse-ear cress), this protein is Transcription factor FAMA (FAMA).